The chain runs to 148 residues: Ribonuclease pancreatic (148 aa).

An N-terminal signal peptide occupies residues 1 to 25; sequence MGLEKSLILFPLLVLVVGWVQPSLG. Residues K32, R35, 65-69, K90, and R109 each bind substrate; that span reads KPVNT. Disulfide bonds link C50–C108, C64–C119, C82–C134, and C89–C96. H143 functions as the Proton donor in the catalytic mechanism.

It belongs to the pancreatic ribonuclease family. Monomer. Interacts with and forms tight 1:1 complexes with RNH1. Dimerization of two such complexes may occur. Interaction with RNH1 inhibits this protein. As to expression, pancreas.

It is found in the secreted. It catalyses the reaction an [RNA] containing cytidine + H2O = an [RNA]-3'-cytidine-3'-phosphate + a 5'-hydroxy-ribonucleotide-3'-[RNA].. The catalysed reaction is an [RNA] containing uridine + H2O = an [RNA]-3'-uridine-3'-phosphate + a 5'-hydroxy-ribonucleotide-3'-[RNA].. Its function is as follows. Endonuclease that catalyzes the cleavage of RNA on the 3' side of pyrimidine nucleotides. Acts on single-stranded and double-stranded RNA. This chain is Ribonuclease pancreatic (RNASE1), found in Peromyscus leucopus (White-footed mouse).